A 489-amino-acid chain; its full sequence is N-succinylglutamate 5-semialdehyde dehydrogenase (489 aa).

223–228 (GSSRTG) provides a ligand contact to NAD(+). Residues Glu-246 and Cys-280 contribute to the active site.

The protein belongs to the aldehyde dehydrogenase family. AstD subfamily.

The enzyme catalyses N-succinyl-L-glutamate 5-semialdehyde + NAD(+) + H2O = N-succinyl-L-glutamate + NADH + 2 H(+). Its pathway is amino-acid degradation; L-arginine degradation via AST pathway; L-glutamate and succinate from L-arginine: step 4/5. Functionally, catalyzes the NAD-dependent reduction of succinylglutamate semialdehyde into succinylglutamate. In Aeromonas salmonicida (strain A449), this protein is N-succinylglutamate 5-semialdehyde dehydrogenase.